The sequence spans 34 residues: Potassium channel toxin alpha-KTx 6 hetlaxin (34 aa).

Disulfide bonds link Cys-3/Cys-24, Cys-9/Cys-29, Cys-13/Cys-31, and Cys-19/Cys-34. Cys-34 carries the post-translational modification Cysteine amide.

Post-translationally, contains 4 disulfide bonds. Expressed by the venom gland.

It is found in the secreted. Its function is as follows. Binds to voltage-gated potassium channels Kv1.3/KCNA3 (IC(50)=0.48 uM) and Kv1.1/KCNA1 (IC(50)=6.7 uM) and inhibits channel activity. The sequence is that of Potassium channel toxin alpha-KTx 6 hetlaxin from Heterometrus laoticus (Thai giant scorpion).